The chain runs to 478 residues: ATP-dependent DNA helicase RecQ (478 aa).

A Helicase ATP-binding domain is found at 28–202 (IDCLLARRDC…VEGLNLRSPE (175 aa)). Position 41-48 (41-48 (LPTGGGKS)) interacts with ATP. The DEAH box motif lies at 142–145 (DEAH). The 152-residue stretch at 229-380 (QLRRFLLKHL…RAEVLSQQIP (152 aa)) folds into the Helicase C-terminal domain. Cys-447, Cys-467, Cys-470, and Cys-473 together coordinate Zn(2+).

The protein belongs to the helicase family. RecQ subfamily. Requires Mg(2+) as cofactor. It depends on Zn(2+) as a cofactor.

It carries out the reaction Couples ATP hydrolysis with the unwinding of duplex DNA by translocating in the 3'-5' direction.. The enzyme catalyses ATP + H2O = ADP + phosphate + H(+). Its function is as follows. An ATP-dependent DNA helicase which unwinds DNA in a 3'-5' direction. The sequence is that of ATP-dependent DNA helicase RecQ from Synechocystis sp. (strain ATCC 27184 / PCC 6803 / Kazusa).